The sequence spans 485 residues: MLDKMANENWPVYGEITGPVVMIGFGSIGRGTLPLIERHFKFDKSRMTVLDPRDTDRKLLDERGIAFVQEAVTENNYKKLLTPLLTNGGGQGFCVNLSVDTGSVDLMRLCRKLGVLYIDTVVEPWLGFYFDAKADNASRTNYALREAMIKEKHDKPGGATVVSTCGANPGMVSWFVKQALVNLATDLGLEFSEPAQEDREGWAKLMKKAGVKGIHIAERDTQRTKKPKPMDVFWNTWSVEGFISEGLQPAELGWGTHEKWMPKNGKKHKHGSKAAIYLEQPGANTRVRSWCPTPGAQYGLLVTHNEAISIADFFTVRSKKGKVQYRPTCHYAYHPSNDAMLSLDEMFGAAGKPQPVHHVLDENELVDGVDELGVLLYGHDKNAYWYGSQLSLAEARKLAPYQNATGMQVTSAVLAGMVWALENPDAGIVEADEMDYKRCLDVQSPYLGPVKGYYTDWTPLDRRPGLFPEDLDRSDPWQFRNILVR.

Belongs to the saccharopine dehydrogenase family. It depends on NAD(+) as a cofactor.

It catalyses the reaction 2 putrescine = sym-homospermidine + NH4(+). It carries out the reaction putrescine + spermidine = sym-homospermidine + propane-1,3-diamine. Functionally, involved in the NAD(+)-dependent synthesis of the polyamine homospermidine from putrescine. The chain is Homospermidine synthase (hss) from Mesorhizobium japonicum (strain LMG 29417 / CECT 9101 / MAFF 303099) (Mesorhizobium loti (strain MAFF 303099)).